The chain runs to 404 residues: Alkane 1-monooxygenase 1 (404 aa).

The next 4 helical transmembrane spans lie at 25 to 45 (HLWI…YLVS), 47 to 67 (TGWS…VPLI), 94 to 114 (VLTY…AWWV), and 119 to 139 (IGVF…GLAL). His143 and His147 together coordinate Fe cation. Residues 151-171 (TFDRWMAKLVLAVVGYGHFFI) form a helical membrane-spanning segment. His173, His177, and His178 together coordinate Fe cation. The chain crosses the membrane as a helical span at residues 241-261 (VVLYAALLAFFGPLMLIFLPI). Fe cation-binding residues include His317, His320, and His321.

The protein belongs to the fatty acid desaturase type 1 family. AlkB subfamily. The cofactor is Fe(3+).

Its subcellular location is the cell inner membrane. The catalysed reaction is octane + 2 reduced [rubredoxin] + O2 + 2 H(+) = 2 oxidized [rubredoxin] + octan-1-ol + H2O. It participates in hydrocarbon metabolism; alkane degradation. Catalyzes the hydroxylation of n-alkanes and fatty acids in the presence of a NADH-rubredoxin reductase and rubredoxin. It preferably hydroxylases C5-C12 hydrocarbons. The chain is Alkane 1-monooxygenase 1 (alkB1) from Alcanivorax borkumensis (strain ATCC 700651 / DSM 11573 / NCIMB 13689 / SK2).